The sequence spans 344 residues: uncharacterized protein (344 aa).

8 consecutive transmembrane segments (helical) span residues 25–45 (GAGW…VGAV), 68–88 (FVDA…ADGV), 104–124 (GVVP…GWNC), 133–153 (SACA…GVGA), 161–181 (GVGT…LAVV), 224–244 (LGAF…DAAL), 276–296 (VFAL…PAAL), and 302–322 (LVTA…LAGV).

The protein belongs to the peptidase S58 family.

Its subcellular location is the cell membrane. Functionally, aminopeptidase. This is an uncharacterized protein from Mycobacterium bovis (strain ATCC BAA-935 / AF2122/97).